The chain runs to 182 residues: Ribosome maturation factor RimP (182 aa).

Belongs to the RimP family.

The protein localises to the cytoplasm. In terms of biological role, required for maturation of 30S ribosomal subunits. In Corynebacterium efficiens (strain DSM 44549 / YS-314 / AJ 12310 / JCM 11189 / NBRC 100395), this protein is Ribosome maturation factor RimP.